A 517-amino-acid polypeptide reads, in one-letter code: Crotonobetaine/carnitine--CoA ligase (517 aa).

The protein belongs to the ATP-dependent AMP-binding enzyme family.

It carries out the reaction 4-(trimethylamino)butanoate + ATP + CoA = 4-(trimethylamino)butanoyl-CoA + AMP + diphosphate. The catalysed reaction is crotonobetaine + ATP + CoA = crotonobetainyl-CoA + AMP + diphosphate. The enzyme catalyses (R)-carnitine + ATP + CoA = (R)-carnitinyl-CoA + AMP + diphosphate. The protein operates within amine and polyamine metabolism; carnitine metabolism. In terms of biological role, catalyzes the transfer of CoA to carnitine, generating the initial carnitinyl-CoA needed for the CaiB reaction cycle. Also has activity toward crotonobetaine and gamma-butyrobetaine. The protein is Crotonobetaine/carnitine--CoA ligase of Salmonella arizonae (strain ATCC BAA-731 / CDC346-86 / RSK2980).